A 418-amino-acid polypeptide reads, in one-letter code: Serine hydroxymethyltransferase (418 aa).

(6S)-5,6,7,8-tetrahydrofolate contacts are provided by residues Leu121 and Gly125–Leu127. Lys230 carries the N6-(pyridoxal phosphate)lysine modification. (6S)-5,6,7,8-tetrahydrofolate contacts are provided by residues Glu246 and Ser355–Phe357.

The protein belongs to the SHMT family. Homodimer. Pyridoxal 5'-phosphate is required as a cofactor.

The protein resides in the cytoplasm. It carries out the reaction (6R)-5,10-methylene-5,6,7,8-tetrahydrofolate + glycine + H2O = (6S)-5,6,7,8-tetrahydrofolate + L-serine. It participates in one-carbon metabolism; tetrahydrofolate interconversion. It functions in the pathway amino-acid biosynthesis; glycine biosynthesis; glycine from L-serine: step 1/1. Its function is as follows. Catalyzes the reversible interconversion of serine and glycine with tetrahydrofolate (THF) serving as the one-carbon carrier. This reaction serves as the major source of one-carbon groups required for the biosynthesis of purines, thymidylate, methionine, and other important biomolecules. Also exhibits THF-independent aldolase activity toward beta-hydroxyamino acids, producing glycine and aldehydes, via a retro-aldol mechanism. The polypeptide is Serine hydroxymethyltransferase (Streptococcus pneumoniae serotype 4 (strain ATCC BAA-334 / TIGR4)).